The primary structure comprises 674 residues: Regulator of G-protein signaling 9 (674 aa).

Positions 30–105 (PETGVRMQNQ…PDGSLYRFQT (76 aa)) constitute a DEP domain. In terms of domain architecture, G protein gamma spans 219–280 (KQTVVAVKKE…NPWITDDTQF (62 aa)). Residues 298 to 413 (RWAFNFSELI…YARYLKSPIY (116 aa)) enclose the RGS domain. Residues 533 to 573 (SSGLEQKGECSGSMAPRGPSVTESSEASLDTSWPRSRPRAP) form a disordered region. Over residues 553-565 (VTESSEASLDTSW) the composition is skewed to polar residues.

In terms of assembly, heterodimer with GNB5. Interacts with RGS7BP, leading to regulate the subcellular location of the heterodimer formed with GNB5. Component of the RGS9-1-Gbeta5 complex composed of RGS9 (RGS9-1), Gbeta5 (GNB5) and RGS9BP. Interacts with PDE6G and GNAT1. Retinal isoform 3 is light-dependent phosphorylated at 'Ser-478'. Phosphorylation is decreased by light exposition. Highly expressed in the caudate and putamen, lower levels found in the hypothalamus and nucleus accumbens and very low levels in cerebellum. Not expressed in globus pallidus or cingulate cortex. Isoform 2 is expressed predominantly in pineal gland and retina. Isoform 3 is expressed in retina (abundant in photoreceptors).

It localises to the membrane. Its function is as follows. Inhibits signal transduction by increasing the GTPase activity of G protein alpha subunits thereby driving them into their inactive GDP-bound form. Binds to GNAT1. Involved in phototransduction; key element in the recovery phase of visual transduction. In Homo sapiens (Human), this protein is Regulator of G-protein signaling 9 (RGS9).